The chain runs to 335 residues: Fructokinase-2 (335 aa).

It belongs to the carbohydrate kinase PfkB family. In terms of tissue distribution, expressed in roots, at higher levels in stems, and hardly detectable in leaves.

The catalysed reaction is D-fructose + ATP = D-fructose 6-phosphate + ADP + H(+). It functions in the pathway glycan biosynthesis; starch biosynthesis. Inhibited at high fructose. In terms of biological role, may play an important role in maintaining the flux of carbon towards starch formation. May also be involved in a sugar-sensing pathway. This Zea mays (Maize) protein is Fructokinase-2 (FRK2).